The following is a 187-amino-acid chain: MNLQHHFLIAMPALQDPIFRRSVVYICEYNDEGAMGIIINKPLENLQVEGILEKLKIVPEPRNPEIRLDKPVMLGGPLAEDRGFILHTPPSDFSSSIRISDNTVVTTSRDVLETLGTDRQPGNVLVALGYSSWEKGQLEQEILDNAWLTAPADQNILFRTPIADRWREAAKLIGIDIVTMPGVAGHA.

It belongs to the UPF0301 (AlgH) family.

In Klebsiella pneumoniae (strain 342), this protein is UPF0301 protein KPK_0728.